Consider the following 111-residue polypeptide: Large ribosomal subunit protein uL24 (111 aa).

This sequence belongs to the universal ribosomal protein uL24 family. As to quaternary structure, part of the 50S ribosomal subunit.

Functionally, one of two assembly initiator proteins, it binds directly to the 5'-end of the 23S rRNA, where it nucleates assembly of the 50S subunit. In terms of biological role, one of the proteins that surrounds the polypeptide exit tunnel on the outside of the subunit. This Cytophaga hutchinsonii (strain ATCC 33406 / DSM 1761 / CIP 103989 / NBRC 15051 / NCIMB 9469 / D465) protein is Large ribosomal subunit protein uL24.